Here is a 611-residue protein sequence, read N- to C-terminus: MQSSSLGNADDPRFRQTHLFQMLVKVINTSAENATKTAIATSSTSTPSFVDTYSTSSLLGEEGRMVMIVVIGAMFALVTSLGNLMVMVSFKIDKQLQTISNYFLFSLAVADIAIGVISIPMFTYYTAIQKWDLGYTMCQFWLCIDYLMSNASVLNLLLISFDRYFSVTRPLSYRPRRTTKKALTMIACTYIISLILWPPWIISWPYIEGKFTAEPGTCVVQFLQTNPYVTVGTAVAAFYLPVTIMCILYTRVYWETQKRQKEFGKLQATQTWASDVVDRPSTQSFRNSKMWKKVKKFSRRSMKRDVSSTSIIKSSGSMRKKNNQDGYVEDSVTPCTSSRNSKRKSWLRNCTGKSNSSSEDSSEAVAMNLDDTSLSSSHFALSGSRRRNISPPCTPMPTNFEDEEQTDAGASMRNGSARFRSRPSDTGKNNNSDTYTVLIELNDEGSRPSVRLSSCEPYLDEPISTRNRSKSDCNSEIDERRHSLLNKQSPFKNGRILKNFSSQERKSEKEQRKNERKQESKAAKTLSAILCAFIATWTPYNLIVCWEAFFPNTVPNVLWTFSYFLCYINSTINPLCYALCNARFRHTYMRILRCKFKAERPTMNQGYVRRN.

The Extracellular portion of the chain corresponds to 1 to 67; the sequence is MQSSSLGNAD…LLGEEGRMVM (67 aa). Residues Asn28 and Asn33 are each glycosylated (N-linked (GlcNAc...) asparagine). The helical transmembrane segment at 68-88 threads the bilayer; the sequence is IVVIGAMFALVTSLGNLMVMV. The Cytoplasmic segment spans residues 89-101; that stretch reads SFKIDKQLQTISN. The chain crosses the membrane as a helical span at residues 102-122; that stretch reads YFLFSLAVADIAIGVISIPMF. The Extracellular segment spans residues 123–140; sequence TYYTAIQKWDLGYTMCQF. Cys138 and Cys218 are oxidised to a cystine. A helical membrane pass occupies residues 141 to 161; the sequence is WLCIDYLMSNASVLNLLLISF. Residues 162–181 lie on the Cytoplasmic side of the membrane; the sequence is DRYFSVTRPLSYRPRRTTKK. The helical transmembrane segment at 182 to 202 threads the bilayer; sequence ALTMIACTYIISLILWPPWII. The Extracellular portion of the chain corresponds to 203–227; sequence SWPYIEGKFTAEPGTCVVQFLQTNP. The chain crosses the membrane as a helical span at residues 228–248; the sequence is YVTVGTAVAAFYLPVTIMCIL. At 249–525 the chain is on the cytoplasmic side; it reads YTRVYWETQK…RKQESKAAKT (277 aa). 4 disordered regions span residues 299-364, 377-432, 446-477, and 500-519; these read RRSM…SSEA, SHFA…NNNS, SRPSVRLSSCEPYLDEPISTRNRSKSDCNSEI, and FSSQERKSEKEQRKNERKQE. Residues 307 to 317 are compositionally biased toward low complexity; that stretch reads SSTSIIKSSGS. Over residues 503–519 the composition is skewed to basic and acidic residues; the sequence is QERKSEKEQRKNERKQE. Residues 526–546 form a helical membrane-spanning segment; that stretch reads LSAILCAFIATWTPYNLIVCW. Residues 547–557 are Extracellular-facing; it reads EAFFPNTVPNV. A helical transmembrane segment spans residues 558 to 578; sequence LWTFSYFLCYINSTINPLCYA. Residues 579–611 are Cytoplasmic-facing; sequence LCNARFRHTYMRILRCKFKAERPTMNQGYVRRN.

This sequence belongs to the G-protein coupled receptor 1 family. Muscarinic acetylcholine receptor subfamily.

It localises to the cell membrane. Functionally, the muscarinic acetylcholine receptor mediates various cellular responses, including inhibition of adenylate cyclase, breakdown of phosphoinositides and modulation of potassium channels through the action of G proteins. Primary transducing effect is Pi turnover. Enhances the release of the neurotransmitter acetlycholine in cholinergic motor neurons, which in turn positively feeds back to depolarize body wall muscles and allows for the maintenance of normal body posture and locomotion. The polypeptide is Muscarinic acetylcholine receptor gar-3 (gar-3) (Caenorhabditis elegans).